A 180-amino-acid chain; its full sequence is Nascent polypeptide-associated complex subunit alpha (180 aa).

An NAC-A/B domain is found at 16–80 (SKNEKKAREL…AKVDDMNKRI (65 aa)). The interval 81–113 (AEAQQQQAQQDALSKAAGETGEAGEEDKSQDAI) is disordered. A compositionally biased stretch (low complexity) spans 82 to 100 (EAQQQQAQQDALSKAAGET). The UBA domain maps to 142–179 (LDAKDIDIIVEQTQVSRAKAVKALRVHDGDMVNAIMEL).

This sequence belongs to the NAC-alpha family. Part of the nascent polypeptide-associated complex (NAC), consisting of EGD2 and EGD1. NAC associates with ribosomes via EGD1.

It is found in the cytoplasm. The protein resides in the nucleus. Component of the nascent polypeptide-associated complex (NAC), a dynamic component of the ribosomal exit tunnel, protecting the emerging polypeptides from interaction with other cytoplasmic proteins to ensure appropriate nascent protein targeting. The NAC complex also promotes mitochondrial protein import by enhancing productive ribosome interactions with the outer mitochondrial membrane and blocks the inappropriate interaction of ribosomes translating non-secretory nascent polypeptides with translocation sites in the membrane of the endoplasmic reticulum. EGD2 may also be involved in transcription regulation. The sequence is that of Nascent polypeptide-associated complex subunit alpha (EGD2) from Debaryomyces hansenii (strain ATCC 36239 / CBS 767 / BCRC 21394 / JCM 1990 / NBRC 0083 / IGC 2968) (Yeast).